A 171-amino-acid chain; its full sequence is Secreted LysM effector Blys4 (171 aa).

Positions lysine 125–leucine 169 constitute a LysM domain.

The protein belongs to the secreted LysM effector family.

In terms of biological role, might have a role in sequestration of chitin oligosaccharides (breakdown products of fungal cell walls that are released during invasion and act as triggers of host immunity) to dampen host defense. This chain is Secreted LysM effector Blys4, found in Beauveria bassiana (strain ARSEF 2860) (White muscardine disease fungus).